Here is an 828-residue protein sequence, read N- to C-terminus: Outer membrane usher protein PmfC (828 aa).

A signal peptide spans 1 to 28 (MLIPYSPHTIWKTICATLLLSLAFFSQA).

This sequence belongs to the fimbrial export usher family.

Its subcellular location is the cell outer membrane. In terms of biological role, involved in the export and assembly of PMF fimbrial subunits across the outer membrane. The protein is Outer membrane usher protein PmfC (pmfC) of Proteus mirabilis (strain HI4320).